Here is a 367-residue protein sequence, read N- to C-terminus: Homeobox protein Nkx-6.1 (367 aa).

The segment at 36–133 (YPAAYPPLPA…SSSSSSSASA (98 aa)) is disordered. Composition is skewed to low complexity over residues 48–59 (PSSSSSSSSSSS), 78–91 (GGLSSLGSPPQQLS), and 110–133 (ASGAALPSASPSGSSSSSSSSASA). A repressor domain region spans residues 102-268 (LSRPSMPVAS…KYLAGPERAR (167 aa)). Residue arginine 189 is modified to Asymmetric dimethylarginine. Positions 236 to 295 (RKHTRPTFSGQQIFALEKTFEQTKYLAGPERARLAYSLGMTESQVKVWFQNRRTKWRKKH) form a DNA-binding region, homeobox. Residues 294–367 (KHAAEMATAK…LHASEPESSS (74 aa)) form a disordered region. The segment covering 304-317 (KKQDSETERLKGAS) has biased composition (basic and acidic residues). The involved in DNA-binding stretch occupies residues 306–367 (QDSETERLKG…LHASEPESSS (62 aa)).

Pancreatic beta cells.

It localises to the nucleus. Its function is as follows. Transcription factor which binds to specific A/T-rich DNA sequences in the promoter regions of a number of genes. Involved in the development of insulin-producing beta cells in the islets of Langerhans at the secondary transition. Together with NKX2-2 and IRX3 acts to restrict the generation of motor neurons to the appropriate region of the neural tube. Belongs to the class II proteins of neuronal progenitor factors, which are induced by SHH signals. The polypeptide is Homeobox protein Nkx-6.1 (NKX6-1) (Homo sapiens (Human)).